Consider the following 129-residue polypeptide: Lysozyme C-1 (129 aa).

Residues 1-129 (KVFERCELAR…VSSYVEGCTL (129 aa)) form the C-type lysozyme domain. 4 disulfide bridges follow: C6-C127, C30-C115, C65-C81, and C77-C95. Active-site residues include E35 and D53.

Belongs to the glycosyl hydrolase 22 family. As to quaternary structure, monomer.

The enzyme catalyses Hydrolysis of (1-&gt;4)-beta-linkages between N-acetylmuramic acid and N-acetyl-D-glucosamine residues in a peptidoglycan and between N-acetyl-D-glucosamine residues in chitodextrins.. Functionally, lysozymes have primarily a bacteriolytic function; those in tissues and body fluids are associated with the monocyte-macrophage system and enhance the activity of immunoagents. The polypeptide is Lysozyme C-1 (Capra hircus (Goat)).